A 156-amino-acid chain; its full sequence is MLYKNINEFEQVIDKTKRIMCLDFGEKKIGVALSDKTNLIAIPHSVYVRKNTRKDLGGLYGILIENDAGSMVIGLPLDLFGMGNELCDKVMLFANRMIKKYAINIYLHDERYSTAMATRVAKLANIKRKESQKIDDKIAAVLILQQVLDMVKIYQM.

This sequence belongs to the YqgF nuclease family.

Its subcellular location is the cytoplasm. In terms of biological role, could be a nuclease involved in processing of the 5'-end of pre-16S rRNA. In Ehrlichia ruminantium (strain Gardel), this protein is Putative pre-16S rRNA nuclease.